The primary structure comprises 149 residues: Large ribosomal subunit protein bL9 (149 aa).

It belongs to the bacterial ribosomal protein bL9 family.

Binds to the 23S rRNA. This is Large ribosomal subunit protein bL9 from Chromobacterium violaceum (strain ATCC 12472 / DSM 30191 / JCM 1249 / CCUG 213 / NBRC 12614 / NCIMB 9131 / NCTC 9757 / MK).